A 454-amino-acid chain; its full sequence is MAANIAMFADIEDYDDTRSCEYGYGTCELMDVDGVVASFDEGMLSASESIYSSPAQKRLALPPPKATSPTALYQRLQAELGFPEGQAMLFAMEKWNEDMFSAIPVHVDLYTEIALLSTSVNEVVKAGLDSLPIPTNYIPEVDLNAHGSEPFPEVPALEDELETYVISAQRFYLSELRAREEHYSRLLRGYCVALLHYLYGSAKRQLRGAGSDSALMHKFKQVVRDRYYRETANLARLLYLHLYISVTREVSWRLHASQVVNQGIFVSLHYTWPQRRKFECLFHPVLFNHGVVILENDPLEFNDLQRINYRRRELGLPLIRAGLIEEENLPLESEPTFSGKLPRTIGFLTHQIRTKMEAYSNAHPSTPLFPLAEHSYSKRIDGRLSYGTTAEAMMDPPSPSAVLPGDPVPPLTVGIRQTAETLALPSNLTLQSMETDVLDYSSISGDELNQMFDI.

Belongs to the herpesviridae tegument protein VP16 protein family. As to quaternary structure, associates with the VP16-induced complex; binding to host HCFC1 activates VP16 for association with the octamer motif-binding host protein POU2F1, to form a multiprotein-DNA complex responsible for activating transcription of the viral immediate early genes.

The protein localises to the virion tegument. It is found in the host nucleus. Functionally, transcriptional activator of immediate-early (IE) gene products (alpha genes). Acts as a key activator of lytic infection by initiating the lytic program through the assembly of the transcriptional regulatory VP16-induced complex composed of VP16 and two cellular factors, HCFC1 and POU2F1. VP16-induced complex represents a regulatory switch: when it is on, it promotes IE-gene expression and thus lytic infection, and when it is off, it limits IE-gene transcription favoring latent infection. Its function is as follows. May play a role in the aggregation of tegument proteins around nucleocapsids during virus morphogenesis. The sequence is that of Tegument protein VP16 homolog (12) from Equine herpesvirus 4 (strain 1942) (EHV-4).